A 49-amino-acid polypeptide reads, in one-letter code: Large ribosomal subunit protein bL33A (49 aa).

Residues 21-49 are disordered; it reads KNKRNNPERVEMKKYCSRDNKHTLHRETK. Residues 25-49 are compositionally biased toward basic and acidic residues; that stretch reads NNPERVEMKKYCSRDNKHTLHRETK.

It belongs to the bacterial ribosomal protein bL33 family.

The sequence is that of Large ribosomal subunit protein bL33A from Staphylococcus epidermidis (strain ATCC 35984 / DSM 28319 / BCRC 17069 / CCUG 31568 / BM 3577 / RP62A).